Consider the following 88-residue polypeptide: YcgL domain-containing protein HI_1446 (88 aa).

One can recognise a YcgL domain in the interval 1–85; that stretch reads MLCAIYKSKK…QDDGLFNSLS (85 aa).

The protein is YcgL domain-containing protein HI_1446 of Haemophilus influenzae (strain ATCC 51907 / DSM 11121 / KW20 / Rd).